The sequence spans 226 residues: UPF0758 protein PSEEN5431 (226 aa).

The 123-residue stretch at 102–224 folds into the MPN domain; sequence VMDNPLAVRR…PLSMIEHGWL (123 aa). Residues His173, His175, and Asp186 each contribute to the Zn(2+) site. The JAMM motif signature appears at 173–186; the sequence is HNHPSGNCEPSQDD.

It belongs to the UPF0758 family.

This chain is UPF0758 protein PSEEN5431, found in Pseudomonas entomophila (strain L48).